The chain runs to 171 residues: Protein-export protein SecB (171 aa).

Belongs to the SecB family. As to quaternary structure, homotetramer, a dimer of dimers. One homotetramer interacts with 1 SecA dimer.

The protein resides in the cytoplasm. One of the proteins required for the normal export of preproteins out of the cell cytoplasm. It is a molecular chaperone that binds to a subset of precursor proteins, maintaining them in a translocation-competent state. It also specifically binds to its receptor SecA. This is Protein-export protein SecB from Histophilus somni (strain 2336) (Haemophilus somnus).